Here is a 245-residue protein sequence, read N- to C-terminus: tRNA (guanine-N(1)-)-methyltransferase (245 aa).

Residues G108 and 127-132 (IGDYVL) contribute to the S-adenosyl-L-methionine site.

Belongs to the RNA methyltransferase TrmD family. As to quaternary structure, homodimer.

It localises to the cytoplasm. It catalyses the reaction guanosine(37) in tRNA + S-adenosyl-L-methionine = N(1)-methylguanosine(37) in tRNA + S-adenosyl-L-homocysteine + H(+). Functionally, specifically methylates guanosine-37 in various tRNAs. The protein is tRNA (guanine-N(1)-)-methyltransferase of Lactobacillus delbrueckii subsp. bulgaricus (strain ATCC 11842 / DSM 20081 / BCRC 10696 / JCM 1002 / NBRC 13953 / NCIMB 11778 / NCTC 12712 / WDCM 00102 / Lb 14).